The chain runs to 652 residues: MNKRMNELVALLNRYATEYYTSDNPSVSDSEYDRLYRELVELETAYPEQVLADSPTHRVGGKVLDGFEKYSHQYPLYSLQDAFSCEELDAFDARVRKEVAHPTYICELKIDGLSISLTYEKGILVAGVTRGDGSIGENITENLKRVKDIPLTLPEELDITVRGECYMPRASFDQVNQARQENGEPEFANPRNAAAGTLRQLDTAVVAKRNLATFLYQEASPSTRDSQEKGLKYLEQLGFVVNPKRILAENIDEIWNFIQEVGQERENLPYDIDGVVIKVNDLASQEELGFTVKAPKWAVAYKFPAEEKEAQLLSVDWTVGRTGVVTPTANLTPVQLAGTTVSRATLHNVDYIAEKDIRKDDTVIVYKAGDIIPAVLRVVESKRVSEEKLDIPTNCPSCNSDLLHFEDEVALRCINPRCPAQIMEGLIHFASRDAMNITGLGPSIVEKLFAANLVKDVADIYRLQEEDFLLLEGVKEKSAAKLYQAIQASKENSAEKLLFGLGIRHVGSKVSQLLLQYFHSIENLSQADSEEVASIESLGGVIAKSLQTYFATEGSEILLRELKETGVNLDYKGQTVVADAALSGLTVVLTGKLERLKRSEAKSKLESLGAKVTGSISKKTDLVVVGADAGSKLQKAQELGIQVRDEAWLESL.

Residues 29-33 (DSEYD), 78-79 (SL), and glutamate 107 contribute to the NAD(+) site. The active-site N6-AMP-lysine intermediate is the lysine 109. Arginine 130, glutamate 164, lysine 278, and lysine 302 together coordinate NAD(+). The Zn(2+) site is built by cysteine 395, cysteine 398, cysteine 413, and cysteine 418. The region spanning 577-652 (VADAALSGLT…VRDEAWLESL (76 aa)) is the BRCT domain.

This sequence belongs to the NAD-dependent DNA ligase family. LigA subfamily. Mg(2+) serves as cofactor. Requires Mn(2+) as cofactor.

The enzyme catalyses NAD(+) + (deoxyribonucleotide)n-3'-hydroxyl + 5'-phospho-(deoxyribonucleotide)m = (deoxyribonucleotide)n+m + AMP + beta-nicotinamide D-nucleotide.. In terms of biological role, DNA ligase that catalyzes the formation of phosphodiester linkages between 5'-phosphoryl and 3'-hydroxyl groups in double-stranded DNA using NAD as a coenzyme and as the energy source for the reaction. It is essential for DNA replication and repair of damaged DNA. The polypeptide is DNA ligase (Streptococcus pneumoniae serotype 4 (strain ATCC BAA-334 / TIGR4)).